Here is a 1426-residue protein sequence, read N- to C-terminus: Nephrocystin-4 (1426 aa).

Residue Ser-142 is modified to Phosphoserine. 2 disordered regions span residues 450–536 and 896–935; these read GSEE…SPAQ and RQGKGPQDVSRESDATRRRKLERMRSVRLQEAGGDLGRRG. Residues 474–486 show a composition bias toward pro residues; sequence KPPTSPSSPPAPV. The span at 503-536 shows a compositional bias: polar residues; the sequence is SISQLAASPRSPTQHCLARPTSQLPHGSQASPAQ. Residues 823–1426 form a sufficient for basal bodies localization region; sequence LTLANVGHPC…EAFCVKVIYQ (604 aa).

Belongs to the NPHP4 family. In terms of assembly, interacts with NPHP1. Interacts with NPHP1 and RPGRIP1L/NPHP8; NPHP1, NPHP4 and RPGRIP1L are proposed to form a functional NPHP1-4-8 module localized to cell-cell contacts and the ciliary transition zone; NPHP4 mediates the interaction between NPHP1 and RPGRIP1L. Interacts with IQCB1/NPHP5; the interaction likely requires additional interactors. Interacts with RPGRIP1, CEP164, JADE1, PALS1, INADL, PARD6A, INVS, DVL2, LATS1. Interacts with INTU; INTU mediates the interaction between NPHP4 and DAAM1. Interacts with SPATA7. Expressed in kidney, skeletal muscle, heart and liver, and to a lesser extent in brain and lung.

The protein localises to the cytoplasm. The protein resides in the cytoskeleton. It is found in the cilium basal body. It localises to the microtubule organizing center. Its subcellular location is the centrosome. The protein localises to the cell junction. The protein resides in the tight junction. It is found in the nucleus. Its function is as follows. Involved in the organization of apical junctions; the function is proposed to implicate a NPHP1-4-8 module. Does not seem to be strictly required for ciliogenesis. Required for building functional cilia. Involved in the organization of the subapical actin network in multiciliated epithelial cells. Seems to recruit INT to basal bodies of motile cilia which subsequently interacts with actin-modifying proteins such as DAAM1. In cooperation with INVS may down-regulate the canonical Wnt pathway and promote the Wnt-PCP pathway by regulating expression and subcellular location of disheveled proteins. Stabilizes protein levels of JADE1 and promotes its translocation to the nucleus leading to cooperative inhibition of canonical Wnt signaling. Acts as a negative regulator of the hippo pathway by association with LATS1 and modifying LATS1-dependent phosphorylation and localization of WWTR1/TAZ. The sequence is that of Nephrocystin-4 (NPHP4) from Homo sapiens (Human).